Consider the following 1051-residue polypeptide: Ubiquitin-activating enzyme E1 1 (1051 aa).

2 tandem repeats follow at residues 56–194 (GRET…GSVF) and 453–605 (GSKL…QMVI). Residues 56–605 (GRETMKRLFG…GAKCNTQMVI (550 aa)) form a 2 approximate repeats region. Residues Ala472, Asp498, Arg509, Lys522, and 570-571 (DN) contribute to the ATP site. The active-site Glycyl thioester intermediate is Cys626.

The protein belongs to the ubiquitin-activating E1 family. As to quaternary structure, monomer. The N-terminus is blocked.

The catalysed reaction is ATP + ubiquitin + [E1 ubiquitin-activating enzyme]-L-cysteine = AMP + diphosphate + S-ubiquitinyl-[E1 ubiquitin-activating enzyme]-L-cysteine.. It participates in protein modification; protein ubiquitination. Its function is as follows. Activates ubiquitin by first adenylating its C-terminal glycine residue with ATP, and thereafter linking this residue to the side chain of a cysteine residue in E1, yielding a ubiquitin-E1 thioester and free AMP. The chain is Ubiquitin-activating enzyme E1 1 from Triticum aestivum (Wheat).